The following is a 480-amino-acid chain: Iron-sulfur cluster assembly SufBD family protein slr0074 (480 aa).

It belongs to the iron-sulfur cluster assembly SufBD family.

In Synechocystis sp. (strain ATCC 27184 / PCC 6803 / Kazusa), this protein is Iron-sulfur cluster assembly SufBD family protein slr0074.